We begin with the raw amino-acid sequence, 624 residues long: 1-deoxy-D-xylulose-5-phosphate synthase (624 aa).

Thiamine diphosphate is bound by residues His80 and 121–123; that span reads GHS. Asp152 contacts Mg(2+). Residues 153-154, Asn181, Tyr289, and Glu371 contribute to the thiamine diphosphate site; that span reads GA. Asn181 is a Mg(2+) binding site.

Belongs to the transketolase family. DXPS subfamily. In terms of assembly, homodimer. Requires Mg(2+) as cofactor. The cofactor is thiamine diphosphate.

It carries out the reaction D-glyceraldehyde 3-phosphate + pyruvate + H(+) = 1-deoxy-D-xylulose 5-phosphate + CO2. The protein operates within metabolic intermediate biosynthesis; 1-deoxy-D-xylulose 5-phosphate biosynthesis; 1-deoxy-D-xylulose 5-phosphate from D-glyceraldehyde 3-phosphate and pyruvate: step 1/1. Functionally, catalyzes the acyloin condensation reaction between C atoms 2 and 3 of pyruvate and glyceraldehyde 3-phosphate to yield 1-deoxy-D-xylulose-5-phosphate (DXP). This chain is 1-deoxy-D-xylulose-5-phosphate synthase, found in Blochmanniella pennsylvanica (strain BPEN).